A 184-amino-acid chain; its full sequence is PLASMODESMATA CALLOSE-BINDING PROTEIN 3 (184 aa).

The N-terminal stretch at 1-19 (MAVFVLVMILLAMAGHSSG) is a signal peptide. Cysteines 22 and 84 form a disulfide. The interval 109–146 (SGSGTTTPVTTTPSTRVPTTTNTRPYTITPSTGGGLGI) is disordered. The span at 113–139 (TTTPVTTTPSTRVPTTTNTRPYTITPS) shows a compositional bias: low complexity. A lipid anchor (GPI-anchor amidated serine) is attached at Ser-158. Residues 159 to 184 (FGFKLQSPRFGFIVLFTLFLPFYLFS) constitute a propeptide, removed in mature form.

In terms of processing, contains two additional disulfide bonds. Expressed in the shoot apical region and in young leaves but also detected in the laminar and vasculature of mature leaves.

It localises to the cell membrane. It is found in the cell junction. Its subcellular location is the plasmodesma. This Arabidopsis thaliana (Mouse-ear cress) protein is PLASMODESMATA CALLOSE-BINDING PROTEIN 3 (PDCB3).